We begin with the raw amino-acid sequence, 79 residues long: Defensin-like protein 272 (79 aa).

Residues 1-24 (MSSKIKFVALLIVVISLLLNNAQS) form the signal peptide. 4 cysteine pairs are disulfide-bonded: Cys34–Cys77, Cys43–Cys63, Cys49–Cys75, and Cys53–Cys76.

Belongs to the DEFL family.

It localises to the secreted. In Arabidopsis thaliana (Mouse-ear cress), this protein is Defensin-like protein 272.